The chain runs to 350 residues: Protein Wnt-8b (350 aa).

Residues 1–21 (MFLMKPVCVLLVTCVLHRSHA) form the signal peptide. An intrachain disulfide couples Cys-53 to Cys-64. N-linked (GlcNAc...) asparagine glycosylation occurs at Asn-102. 10 disulfides stabilise this stretch: Cys-103/Cys-111, Cys-113/Cys-131, Cys-179/Cys-193, Cys-181/Cys-188, Cys-255/Cys-293, Cys-271/Cys-286, Cys-290/Cys-332, Cys-308/Cys-323, Cys-310/Cys-320, and Cys-315/Cys-316. Residue Ser-185 is the site of O-palmitoleoyl serine attachment. Asn-258 carries N-linked (GlcNAc...) asparagine glycosylation.

It belongs to the Wnt family. Palmitoleoylation is required for efficient binding to frizzled receptors. Depalmitoleoylation leads to Wnt signaling pathway inhibition. Post-translationally, proteolytic processing by TIKI1 and TIKI2 promotes oxidation and formation of large disulfide-bond oligomers, leading to inactivation of WNT8B.

The protein localises to the secreted. It localises to the extracellular space. Its subcellular location is the extracellular matrix. Ligand for members of the frizzled family of seven transmembrane receptors. May play an important role in the development and differentiation of certain forebrain structures, notably the hippocampus. In Mus musculus (Mouse), this protein is Protein Wnt-8b (Wnt8b).